The primary structure comprises 59 residues: Preprotein translocase subunit SecG (59 aa).

Residues 1 to 35 (MPSSKKKKEDVPIASMAGLVRYYESEKEKVKISPK) are Cytoplasmic-facing. The helical transmembrane segment at 36 to 56 (VVVVASIVLIAGVIIASFIIP) threads the bilayer. Residues 57-59 (PPL) are Extracellular-facing.

It belongs to the SEC61-beta family. In terms of assembly, component of the protein translocase complex. Heterotrimer consisting of alpha (SecY), beta (SecG) and gamma (SecE) subunits. Can form oligomers of the heterotrimer.

The protein resides in the cell membrane. Involved in protein export. The function of the beta subunit is unknown, but it may be involved in stabilization of the trimeric complex. The sequence is that of Preprotein translocase subunit SecG from Sulfolobus acidocaldarius (strain ATCC 33909 / DSM 639 / JCM 8929 / NBRC 15157 / NCIMB 11770).